We begin with the raw amino-acid sequence, 331 residues long: LIM/homeobox protein Lhx9 (331 aa).

LIM zinc-binding domains follow at residues 71 to 132 (TLCA…FSVK) and 133 to 194 (RCAR…LVQG). Residues 253 to 275 (ETDLDRDQTYPPSQKTKRMRTSF) are disordered. The segment at residues 268–327 (TKRMRTSFKHHQLRTMKSYFAINHNPDAKDLKQLAQKTGLTKRVLQGEQCSGFNSHTTRR) is a DNA-binding region (homeobox).

It localises to the nucleus. Its function is as follows. May be involved in gonadal development. This is LIM/homeobox protein Lhx9 (lhx9) from Xenopus laevis (African clawed frog).